Here is a 129-residue protein sequence, read N- to C-terminus: Large ribosomal subunit protein bL32m (129 aa).

Residues 1 to 63 (MAAMTAAAAA…LEDIWEGILR (63 aa)) constitute a mitochondrion transit peptide. Zn(2+) contacts are provided by C94, C97, C107, and C110.

It belongs to the bacterial ribosomal protein bL32 family. In terms of assembly, component of the mitochondrial large ribosomal subunit (mt-LSU). Mature N.crassa 74S mitochondrial ribosomes consist of a small (37S) and a large (54S) subunit. The 37S small subunit contains a 16S ribosomal RNA (16S mt-rRNA) and 32 different proteins. The 54S large subunit contains a 23S rRNA (23S mt-rRNA) and 42 different proteins. bL32m has a zinc binding site. MRPL32 precursor is processed by the m-AAA protease (composed of YTA12/RCA1 and YTA10/AFG3), which cleaves the N-terminal transit peptide. Cleavage by the m-AAA protease takes place prior to assembly into the large subunit, an essential step for mitochondrial ribosome (mitoribosome) assembly. Proper processing by the m-AAA protease is dependent on the zinc-binding region within the tightly folded C-terminal domain of MRPL32: zinc-dependent folding halts degradation initiated from the N-terminus and triggers the release of mature MRPL32.

The protein resides in the mitochondrion. In terms of biological role, component of the mitochondrial ribosome (mitoribosome), a dedicated translation machinery responsible for the synthesis of mitochondrial genome-encoded proteins, including at least some of the essential transmembrane subunits of the mitochondrial respiratory chain. The mitoribosomes are attached to the mitochondrial inner membrane and translation products are cotranslationally integrated into the membrane. This chain is Large ribosomal subunit protein bL32m (mrpl32), found in Neurospora crassa (strain ATCC 24698 / 74-OR23-1A / CBS 708.71 / DSM 1257 / FGSC 987).